A 443-amino-acid polypeptide reads, in one-letter code: Threonine/serine transporter TdcC (443 aa).

The next 11 helical transmembrane spans lie at 22 to 42 (TTWT…FFPI), 44 to 64 (AGFG…PIAF), 97 to 117 (GVVI…IYGV), 140 to 160 (VVAL…KDLM), 163 to 183 (VMSY…LSLI), 207 to 227 (ILVT…FSPI), 259 to 279 (ASML…FTLS), 319 to 339 (ASII…LGTL), 366 to 386 (LSMV…PNIL), 389 to 409 (IEAM…MYAI), and 423 to 443 (DNLF…YKLF).

It belongs to the amino acid/polyamine transporter 2 family. SdaC/TdcC subfamily.

The protein localises to the cell inner membrane. The catalysed reaction is L-threonine(in) + H(+)(in) = L-threonine(out) + H(+)(out). It catalyses the reaction L-serine(in) + H(+)(in) = L-serine(out) + H(+)(out). Functionally, involved in the import of threonine and serine into the cell, with the concomitant import of a proton (symport system). This Klebsiella pneumoniae (strain 342) protein is Threonine/serine transporter TdcC.